Reading from the N-terminus, the 304-residue chain is Lipid droplet-associated triacylglycerol lipase (304 aa).

The Lumenal segment spans residues 1–155 (MTVKEYTKSK…MGIKMTAALR (155 aa)). N-linked (GlcNAc...) asparagine glycosylation is present at Asn-95. A GXSXG motif is present at residues 107–111 (GHSVG). The active-site Nucleophile is the Ser-109. The stretch at 156 to 176 (YIPPLAHVVSLFSYIFFYWIL) is an intramembrane region. Residues 177–304 (SEGFSRFIID…HAEYAINAFF (128 aa)) lie on the Lumenal side of the membrane.

Belongs to the AB hydrolase superfamily. LDAH family.

The protein localises to the lipid droplet. The protein resides in the membrane. The catalysed reaction is a triacylglycerol + H2O = a diacylglycerol + a fatty acid + H(+). Shows both triacylglycerol (TAG) lipase and ester hydrolase activities. May play a role in TAG homeostasis. The chain is Lipid droplet-associated triacylglycerol lipase from Saccharomyces cerevisiae (strain ATCC 204508 / S288c) (Baker's yeast).